The chain runs to 305 residues: Cytochrome c biogenesis protein CcsA (305 aa).

A run of 8 helical transmembrane segments spans residues 13-33, 42-62, 70-90, 97-117, 135-155, 212-232, 242-262, and 276-296; these read IYFSFILVITLVFGGTLVYPV, KGIIFPFFCITLNLIIRWFYS, LYESLMFFSWNFCLIPFFIDI, WIGVITAPSALFTHAFATLIL, WLIMHVTIIFLGYVTLLCGSL, YTIVIGFTFLTIGILSGAVWA, WDPKEIWALITWLIFANYIHI, and VASLGLFFVWICYFGVNILGI.

The protein belongs to the CcmF/CycK/Ccl1/NrfE/CcsA family. In terms of assembly, may interact with Ccs1.

The protein resides in the plastid. The protein localises to the chloroplast thylakoid membrane. Required during biogenesis of c-type cytochromes (cytochrome c6 and cytochrome f) at the step of heme attachment. The sequence is that of Cytochrome c biogenesis protein CcsA from Welwitschia mirabilis (Tree tumbo).